The primary structure comprises 169 residues: Der GTPase-activating protein YihI (169 aa).

Disordered regions lie at residues 1-100 and 144-169; these read MKPS…AELE and GLSY…LRGN. Basic residues predominate over residues 10–19; sequence SKGHAKARRK. Basic and acidic residues predominate over residues 20-30; the sequence is TREELDQEARD. A compositionally biased stretch (basic residues) spans 31-40; the sequence is RKRQKKRRGH. Residues 49-58 show a composition bias toward polar residues; sequence GNTTSGSKGQ. Residues 147 to 159 are compositionally biased toward acidic residues; that stretch reads YDDDEEEEEDEKQ. Positions 160–169 are enriched in basic and acidic residues; it reads EDMMRLLRGN.

It belongs to the YihI family. Interacts with Der.

Functionally, a GTPase-activating protein (GAP) that modifies Der/EngA GTPase function. May play a role in ribosome biogenesis. This Escherichia coli O6:H1 (strain CFT073 / ATCC 700928 / UPEC) protein is Der GTPase-activating protein YihI.